We begin with the raw amino-acid sequence, 535 residues long: Probable galacturonosyltransferase 12 (535 aa).

Over 1 to 37 (MQLHISPSLRHVTVVTGKGLREFIKVKVGSRRFSYQM) the chain is Cytoplasmic. The helical; Signal-anchor for type II membrane protein transmembrane segment at 38-58 (VFYSLLFFTFLLRFVFVLSTV) threads the bilayer. At 59–535 (DTIDGDPSPC…FIKSCHIRAS (477 aa)) the chain is on the lumenal side. Asn397 and Asn430 each carry an N-linked (GlcNAc...) asparagine glycan.

This sequence belongs to the glycosyltransferase 8 family. In terms of tissue distribution, highly expressed in stems. Detected in roots, inflorescences, siliques, and leaves. Expressed in cells undergoing secondary wall thickening, including interfascicular fibers and primary and secondary xylem.

It is found in the golgi apparatus membrane. Its pathway is glycan metabolism; pectin biosynthesis. Its function is as follows. Involved in pectin assembly and/or distribution, and in the synthesis of secondary wall glucuronoxylan. Probably involved in the synthesis of the glycosyl sequence at the glucuronoxylan reducing end. May be involved in synthesis of a complex glycan primer for xylan synthesis. The polypeptide is Probable galacturonosyltransferase 12 (GAUT12) (Arabidopsis thaliana (Mouse-ear cress)).